A 166-amino-acid chain; its full sequence is Putative membrane protein 164 (166 aa).

Topologically, residues 1 to 4 (MYHP) are intravirion. A helical transmembrane segment spans residues 5–25 (VVQVLIGLILVIILILGFYHL). At 26 to 166 (KKKSCKTDTD…TIMGIARNIL (141 aa)) the chain is on the virion surface side.

This sequence belongs to the asfivirus envelope protein p22 family.

It is found in the virion membrane. Its subcellular location is the host cell membrane. This chain is Putative membrane protein 164, found in Ornithodoros (relapsing fever ticks).